Here is a 182-residue protein sequence, read N- to C-terminus: UPF0397 protein BcerKBAB4_2500 (182 aa).

A run of 5 helical transmembrane segments spans residues 9–29 (VVAIGIGAALYGVLGLWGFSI), 40–60 (AILTVFGALFGPVAGLLIGLI), 71–91 (WGIWWGWVISSGIIGLAMGLI), 114–134 (IAGLIGIVIAIIFAGSFDIIV), and 142–162 (IVIQVLGATIADVIVFLVLGL).

It belongs to the UPF0397 family.

The protein resides in the cell membrane. The chain is UPF0397 protein BcerKBAB4_2500 from Bacillus mycoides (strain KBAB4) (Bacillus weihenstephanensis).